A 321-amino-acid chain; its full sequence is MMDSNRPNTYKAAVVQAASDPTSSLVSAQKAAALIEKAAGAGARLVVFPEAFIGGYPKGNSFGAPVGMRKPEGREAFRLYWEAAIDLDGVEVETIAAAAAATGAFTVIGCIEREQGTLYCTALFFDGARGLVGKHRKLMPTAGERLIWGFGDGSTMPVFETSLGNIGAVICWENYMPMLRMHMYSQGISIYCAPTADDRDTWLPTMQHIALEGRCFVLTACQHLKRGAFPADYECALGADPETVLMRGGSAIVNPLGKVLAGPCFEGETILYADIALDEVTRGKFDFDAAGHYSRPDVFQLVVDDRPKRAVSTVSAVRARN.

One can recognise a CN hydrolase domain in the interval 10–277 (YKAAVVQAAS…ETILYADIAL (268 aa)). The active-site Proton acceptor is Glu-50. Residue Lys-137 is the Proton donor of the active site. Residue Cys-171 is the Nucleophile of the active site.

Belongs to the carbon-nitrogen hydrolase superfamily. Nitrilase family. In terms of assembly, homodecamer.

The enzyme catalyses an aliphatic nitrile + 2 H2O = a carboxylate + NH4(+). Its function is as follows. Nitrilase that acts on various kinds of nitrile compounds such as aliphatic and aromatic nitriles. Has higher activity toward aliphatic nitriles compared to aromatic nitriles. Among the different substrates tested, has the highest activity toward hydrocinnamonitrile. This is Nitrilase blr3397 from Bradyrhizobium diazoefficiens (strain JCM 10833 / BCRC 13528 / IAM 13628 / NBRC 14792 / USDA 110).